The chain runs to 467 residues: H(+)/Cl(-) exchange transporter ClcA (467 aa).

The Cytoplasmic segment spans residues 1–30 (MTKRERIIQSVLVKVPKDAINQFLSHGSTP). Residues 31 to 67 (ISVLFLAALVGVLAGLVGTYFEIAVHFVSETRTEWLK) form a helical membrane-spanning segment. Residues 68–74 (SEIGHLL) are Periplasmic-facing. The helical transmembrane segment at 75 to 98 (PLWLAAILISAALAFVGYFLVHRF) threads the bilayer. A Selectivity filter part_1 motif is present at residues 104–108 (GSGIP). Position 105 (Ser105) interacts with chloride. An intramembrane region (helical) is located at residues 107–114 (IPEIEGAM). The Cytoplasmic portion of the chain corresponds to 115 to 121 (DNIRPVR). 2 consecutive transmembrane segments (helical) span residues 122 to 139 (WWRVIPVKFFGGMGALGS) and 146 to 164 (EGPTVQMGGAVGRMVTDIF). The Selectivity filter part_2 signature appears at 144–148 (GREGP). Residues 165–174 (RVKDDDTRHS) lie on the Cytoplasmic side of the membrane. Intramembrane regions (helical) lie at residues 175–187 (LLASGAAGGLAAA) and 191–199 (PLAGIMFVV). Residues 200 to 212 (EEMRPQFRYSLIS) are Cytoplasmic-facing. Residues 213–230 (IRAVIISAVMANIVFRAI) form a helical membrane-spanning segment. Over 231–250 (NGQDAVITMPQYQPPELKAL) the chain is Periplasmic. The chain crosses the membrane as a helical span at residues 251-279 (WLFLLLGGLFGVFGVLFNKLVTVAQDAFV). Residues 280 to 285 (ALHKND) are Cytoplasmic-facing. A helical transmembrane segment spans residues 286–307 (RKRYLITGTCLGGIFGLLLLYV). Residues 308–327 (PELTGGGIHLIPDVTNGNYS) lie on the Periplasmic side of the membrane. 2 consecutive transmembrane segments (helical) span residues 328–347 (VSLLVMLFVGRVLTTLICFG) and 353–374 (GIFAPMLALGTLFGYAFGATAK). A Selectivity filter part_3 motif is present at residues 353–357 (GIFAP). Chloride is bound by residues Ile354 and Phe355. At 375-384 (ILLPDLPIEP) the chain is on the periplasmic side. Positions 385–399 (GMFAIAGMGALFAAT) form an intramembrane region, helical. The note=Loop between two helices intramembrane region spans 400–402 (VRA). The helical intramembrane region spans 403–414 (PITGILLVIEMT). The note=Loop between two helices intramembrane region spans 415-419 (NNYYL). A helical membrane pass occupies residues 420 to 436 (ILPLIITSLGAVICAQI). The Cytoplasmic portion of the chain corresponds to 437–467 (CGGKPIYSQLLHRTIKNDKLRQQDLPEQQNS). Tyr443 contributes to the chloride binding site.

It belongs to the chloride channel (TC 2.A.49) family. ClcA subfamily. In terms of assembly, homodimer.

Its subcellular location is the cell inner membrane. The enzyme catalyses 2 chloride(in) + H(+)(out) = 2 chloride(out) + H(+)(in). In terms of biological role, proton-coupled chloride transporter. Functions as antiport system and exchanges two chloride ions for 1 proton. Probably acts as an electrical shunt for an outwardly-directed proton pump that is linked to amino acid decarboxylation, as part of the extreme acid resistance (XAR) response. This chain is H(+)/Cl(-) exchange transporter ClcA, found in Vibrio vulnificus (strain CMCP6).